Here is a 143-residue protein sequence, read N- to C-terminus: Deoxyuridine 5'-triphosphate nucleotidohydrolase (143 aa).

Belongs to the dUTPase family. Mg(2+) is required as a cofactor.

It carries out the reaction dUTP + H2O = dUMP + diphosphate + H(+). In terms of biological role, this enzyme is involved in nucleotide metabolism: it produces dUMP, the immediate precursor of thymidine nucleotides and it decreases the intracellular concentration of dUTP so that uracil cannot be incorporated into DNA. The protein is Deoxyuridine 5'-triphosphate nucleotidohydrolase (DUT) of Yaba monkey tumor virus (strain VR587) (YMTV).